A 68-amino-acid polypeptide reads, in one-letter code: Metallothionein (68 aa).

This sequence belongs to the metallothionein superfamily. Type 4 family.

Metallothioneins have a high content of cysteine residues that bind various heavy metals. The protein is Metallothionein (MT1) of Lytechinus pictus (Painted sea urchin).